Here is a 354-residue protein sequence, read N- to C-terminus: Biotin synthase (354 aa).

Positions 41–265 (NEVQISRLLS…IMPHSRVRLS (225 aa)) constitute a Radical SAM core domain. Positions 56, 60, and 63 each coordinate [4Fe-4S] cluster. [2Fe-2S] cluster contacts are provided by Cys-100, Cys-131, Cys-191, and Arg-263.

It belongs to the radical SAM superfamily. Biotin synthase family. As to quaternary structure, homodimer. The cofactor is [4Fe-4S] cluster. Requires [2Fe-2S] cluster as cofactor.

The enzyme catalyses (4R,5S)-dethiobiotin + (sulfur carrier)-SH + 2 reduced [2Fe-2S]-[ferredoxin] + 2 S-adenosyl-L-methionine = (sulfur carrier)-H + biotin + 2 5'-deoxyadenosine + 2 L-methionine + 2 oxidized [2Fe-2S]-[ferredoxin]. The protein operates within cofactor biosynthesis; biotin biosynthesis; biotin from 7,8-diaminononanoate: step 2/2. Its function is as follows. Catalyzes the conversion of dethiobiotin (DTB) to biotin by the insertion of a sulfur atom into dethiobiotin via a radical-based mechanism. The chain is Biotin synthase from Shewanella sediminis (strain HAW-EB3).